Here is a 590-residue protein sequence, read N- to C-terminus: MCGIIGIVSSKEDKKIADKVISALKRLEYRGYDSVGVASLDNNKLEVRKAKGTVEEVISKKKVSEMSGYIFLGHTRWATHGPPTDYNAHPHVDCSGKIAVIHNGTIKNYKELREELQTLGHVFKSDTDTEIIPHLIEEFMKRGMDAYSAFRNSIKTLEGSYAVLAVIHGEKRIFFAKRDNPLVIGLGEKENYIASDIPAFLSYTKRILVIKDGELGFITTSNVFIEDKDGNPVDLSDRVRVIDWDVETASKEGYPHFMIKEIHESPKSIRDTVDSLISDLDLIDKIIAEMKSSGRIVVVGAGTSYHAGLYFSLLLSREGMNSFPLIASEYYNFKAKKDDLIFAISQSGETLDLLQAVRKFKEEGARIVSLTNVIESALARESNYKIYMRAGPEISVAATKTFITQLISLLFIYSRLRRDNTNKFRGADTEVERVISSVEGYAKLIGEELSKKTSIYYLGRGMSLPLAMEGALKIKEVAYVHAEAYPAGESKHGPISLVDKGFPIVAINDGEITDLLRNNVIEMKARGAKAYVISANKKISESDVEIYLDSIQFPALSISVVLQLIAYYASVSKGLNPDKPRNLAKTVTVE.

Cys-2 serves as the catalytic Nucleophile; for GATase activity. A Glutamine amidotransferase type-2 domain is found at Cys-2 to Ser-221. SIS domains follow at residues Ile-286–Asn-422 and Ile-445–Pro-580. Catalysis depends on Lys-585, which acts as the For Fru-6P isomerization activity.

In terms of assembly, homodimer.

The protein resides in the cytoplasm. The enzyme catalyses D-fructose 6-phosphate + L-glutamine = D-glucosamine 6-phosphate + L-glutamate. Functionally, catalyzes the first step in hexosamine metabolism, converting fructose-6P into glucosamine-6P using glutamine as a nitrogen source. The sequence is that of Glutamine--fructose-6-phosphate aminotransferase [isomerizing] from Sulfolobus acidocaldarius (strain ATCC 33909 / DSM 639 / JCM 8929 / NBRC 15157 / NCIMB 11770).